Consider the following 235-residue polypeptide: Demethylmenaquinone methyltransferase (235 aa).

Residues T58, D79, and 106-107 (NA) each bind S-adenosyl-L-methionine.

Belongs to the class I-like SAM-binding methyltransferase superfamily. MenG/UbiE family.

It catalyses the reaction a 2-demethylmenaquinol + S-adenosyl-L-methionine = a menaquinol + S-adenosyl-L-homocysteine + H(+). It participates in quinol/quinone metabolism; menaquinone biosynthesis; menaquinol from 1,4-dihydroxy-2-naphthoate: step 2/2. Functionally, methyltransferase required for the conversion of demethylmenaquinol (DMKH2) to menaquinol (MKH2). The chain is Demethylmenaquinone methyltransferase from Shouchella clausii (strain KSM-K16) (Alkalihalobacillus clausii).